The following is a 184-amino-acid chain: Large ribosomal subunit protein uL6 (184 aa).

The protein belongs to the universal ribosomal protein uL6 family. As to quaternary structure, part of the 50S ribosomal subunit.

Functionally, this protein binds to the 23S rRNA, and is important in its secondary structure. It is located near the subunit interface in the base of the L7/L12 stalk, and near the tRNA binding site of the peptidyltransferase center. The polypeptide is Large ribosomal subunit protein uL6 (Mycoplasma pneumoniae (strain ATCC 29342 / M129 / Subtype 1) (Mycoplasmoides pneumoniae)).